Reading from the N-terminus, the 217-residue chain is MASTGLELLGMTLAVLGWLGTLVSCALPLWKVTAFIGNSIVVAQVVWEGLWMSCVVQSTGQMQCKVYDSLLALPQDLQAARALCVVALLLALLGLLVAITGAQCTTCVEDEGAKARIVLTAGVLLLLSGILVLIPVCWTAHAIIQDFYNPLVAEALKRELGASLYLGWAAAALLMLGGGLLCCTCPPSHFERPRGPRLGYSIPSRSGASGLDKRDYV.

At 1–12 the chain is on the cytoplasmic side; the sequence is MASTGLELLGMT. The helical transmembrane segment at 13 to 33 threads the bilayer; that stretch reads LAVLGWLGTLVSCALPLWKVT. Residues 34 to 81 lie on the Extracellular side of the membrane; the sequence is AFIGNSIVVAQVVWEGLWMSCVVQSTGQMQCKVYDSLLALPQDLQAAR. A helical membrane pass occupies residues 82–102; it reads ALCVVALLLALLGLLVAITGA. Over 103–116 the chain is Cytoplasmic; that stretch reads QCTTCVEDEGAKAR. The helical transmembrane segment at 117–137 threads the bilayer; sequence IVLTAGVLLLLSGILVLIPVC. The Extracellular portion of the chain corresponds to 138–159; the sequence is WTAHAIIQDFYNPLVAEALKRE. Residues 160 to 180 form a helical membrane-spanning segment; sequence LGASLYLGWAAAALLMLGGGL. Topologically, residues 181-217 are cytoplasmic; sequence LCCTCPPSHFERPRGPRLGYSIPSRSGASGLDKRDYV.

Belongs to the claudin family. In terms of assembly, interacts with CLDN1, CD81 and OCLN.

Its subcellular location is the cell junction. It localises to the tight junction. It is found in the cell membrane. In terms of biological role, plays a major role in tight junction-specific obliteration of the intercellular space, through calcium-independent cell-adhesion activity. This chain is Claudin-9 (Cldn9), found in Mus musculus (Mouse).